A 32-amino-acid polypeptide reads, in one-letter code: MAQEIFSIAAVFWILIPIGLVGGALLLKFQGD.

A helical membrane pass occupies residues 9–27 (AAVFWILIPIGLVGGALLL).

Belongs to the PetM family. As to quaternary structure, the 4 large subunits of the cytochrome b6-f complex are cytochrome b6, subunit IV (17 kDa polypeptide, PetD), cytochrome f and the Rieske protein, while the 4 small subunits are PetG, PetL, PetM and PetN. The complex functions as a dimer.

The protein resides in the cellular thylakoid membrane. In terms of biological role, component of the cytochrome b6-f complex, which mediates electron transfer between photosystem II (PSII) and photosystem I (PSI), cyclic electron flow around PSI, and state transitions. This Prochlorococcus marinus (strain MIT 9301) protein is Cytochrome b6-f complex subunit 7.